A 399-amino-acid polypeptide reads, in one-letter code: tRNA-specific 2-thiouridylase MnmA (399 aa).

ATP is bound by residues 7–14 (AMSGGVDS) and methionine 33. Cysteine 128 serves as the catalytic Nucleophile. An intrachain disulfide couples cysteine 128 to cysteine 224. Glycine 152 serves as a coordination point for ATP. The tract at residues 174–176 (KDQ) is interaction with tRNA. Catalysis depends on cysteine 224, which acts as the Cysteine persulfide intermediate. The interval 333–334 (RY) is interaction with tRNA.

The protein belongs to the MnmA/TRMU family.

Its subcellular location is the cytoplasm. The enzyme catalyses S-sulfanyl-L-cysteinyl-[protein] + uridine(34) in tRNA + AH2 + ATP = 2-thiouridine(34) in tRNA + L-cysteinyl-[protein] + A + AMP + diphosphate + H(+). In terms of biological role, catalyzes the 2-thiolation of uridine at the wobble position (U34) of tRNA, leading to the formation of s(2)U34. The polypeptide is tRNA-specific 2-thiouridylase MnmA (Rhodopirellula baltica (strain DSM 10527 / NCIMB 13988 / SH1)).